Here is a 45-residue protein sequence, read N- to C-terminus: Ice-structuring protein SS-8 (45 aa).

M1 bears the Blocked amino end (Met) mark. Repeats lie at residues 9–21 (KAAR…ALAA), 22–33 (KTAADAAAKAAA), and 34–45 (KAAAIAAAAASA).

Belongs to the type-I AFP family.

Its function is as follows. Antifreeze proteins lower the blood freezing point. The sequence is that of Ice-structuring protein SS-8 from Myoxocephalus scorpius (Shorthorn sculpin).